The primary structure comprises 165 residues: Transcription antitermination protein NusB (165 aa).

The interval 1-27 is disordered; it reads MISDDTDQFNPRDAKSPEAAKGKSAKR. Basic and acidic residues predominate over residues 10–21; the sequence is NPRDAKSPEAAK.

It belongs to the NusB family.

Involved in transcription antitermination. Required for transcription of ribosomal RNA (rRNA) genes. Binds specifically to the boxA antiterminator sequence of the ribosomal RNA (rrn) operons. This chain is Transcription antitermination protein NusB, found in Pseudomonas savastanoi pv. phaseolicola (strain 1448A / Race 6) (Pseudomonas syringae pv. phaseolicola (strain 1448A / Race 6)).